The sequence spans 172 residues: Small ribosomal subunit protein uS5 (172 aa).

The region spanning Leu16 to Val79 is the S5 DRBM domain.

The protein belongs to the universal ribosomal protein uS5 family. As to quaternary structure, part of the 30S ribosomal subunit. Contacts proteins S4 and S8.

In terms of biological role, with S4 and S12 plays an important role in translational accuracy. Located at the back of the 30S subunit body where it stabilizes the conformation of the head with respect to the body. This is Small ribosomal subunit protein uS5 from Prosthecochloris aestuarii (strain DSM 271 / SK 413).